The primary structure comprises 142 residues: Protein lin-32 (142 aa).

A compositionally biased stretch (polar residues) spans 30–48 (PLQSPNFSLDSPNYPDSLS). The segment at 30 to 66 (PLQSPNFSLDSPNYPDSLSNGGGKDDKKKCRRYKTPS) is disordered. Residues 72–124 (MRRSAANERERRRMNTLNVAYDELREVLPEIDSGKKLSKFETLQMAQKYIECL) enclose the bHLH domain.

As to quaternary structure, forms a heterodimer with hlh-2. In terms of tissue distribution, expressed in PVD motor neurons.

The protein localises to the nucleus. In terms of biological role, probable transcription factor which binds the E box motif 5'-CA[TC][AG]TG-3'. Essential for the specification of the neuroblast cell fate in the development of peripheral sense organs. Its role in the generation of sensory neurons may be through positively regulating the expression of the zinc finger protein ztf-11 during postdeirid neurogenesis. Required for specification of cell fate, acting in concert with lin-32, in the development of the male-specific genital sensilla (simple sense organs) known as rays. Involved in regulating glial specification, perhaps by suppressing a glial fate in different lineages during early embryogenesis. The chain is Protein lin-32 from Caenorhabditis elegans.